We begin with the raw amino-acid sequence, 360 residues long: A-type ATP synthase subunit C (360 aa).

The disordered stretch occupies residues 1 to 25 (MRLLEKLWGQKPSRKSDKKKNGTSN).

It belongs to the V-ATPase V0D/AC39 subunit family. As to quaternary structure, has multiple subunits with at least A(3), B(3), C, D, E, F, H, I and proteolipid K(x).

Its subcellular location is the cell membrane. Functionally, component of the A-type ATP synthase that produces ATP from ADP in the presence of a proton gradient across the membrane. This Methanosarcina barkeri (strain Fusaro / DSM 804) protein is A-type ATP synthase subunit C.